The following is a 172-amino-acid chain: C-phycocyanin beta chain (172 aa).

Asparagine 72 carries the N4-methylasparagine modification. Positions 82 and 153 each coordinate (2R,3E)-phycocyanobilin.

Belongs to the phycobiliprotein family. Heterodimer of an alpha and a beta subunit, which further assembles into trimers and the trimers into hexamers. The basic functional unit of phycobiliproteins is a ring-shaped hexamer formed from two back-to-back trimers contacting via the alpha chain subunits. The trimers are composed of alpha/beta subunit heterodimers arranged around a three-fold axis of symmetry. The phycoerythrins also contain a gamma subunit which is located in the center of the hexamer. Contains two covalently linked bilin chromophores.

It is found in the plastid. The protein localises to the chloroplast thylakoid membrane. Functionally, light-harvesting photosynthetic bile pigment-protein from the phycobiliprotein complex (phycobilisome, PBS). Phycocyanin is the major phycobiliprotein in the PBS rod. The sequence is that of C-phycocyanin beta chain (cpcB) from Aglaothamnion neglectum (Red alga).